Here is a 209-residue protein sequence, read N- to C-terminus: T-cell surface glycoprotein CD8 beta chain (209 aa).

Positions 1–21 are cleaved as a signal peptide; the sequence is MRPRMWLLLSAQLAALHGNSV. One can recognise an Ig-like V-type domain in the interval 22–131; the sequence is LQQTPAYIMV…TLIFGTGTQL (110 aa). Residues 22 to 169 are Extracellular-facing; sequence LQQTPAYIMV…ETRKGPLCSP (148 aa). Residues C41 and C115 are joined by a disulfide bond. N101 is a glycosylation site (N-linked (GlcNAc...) asparagine). Residues 170-190 traverse the membrane as a helical segment; that stretch reads ITLSLLVAGILVLLVSLGVAI. Topologically, residues 191–209 are cytoplasmic; sequence HLYCRQRRARLRFMKQFYK.

As to quaternary structure, forms disulfide-linked heterodimers with CD8A at the cell surface. Interacts with CD3D; this interaction couples TCR-CD3 with CD8. Interacts with LCK. In terms of processing, phosphorylated as a consequence of T-cell activation. Palmitoylated at the cytoplasmic tail and thereby targets the heterodimer CD8A/CD8B to lipid rafts unlike CD8A homodimers.

The protein resides in the cell membrane. Integral membrane glycoprotein that plays an essential role in the immune response and serves multiple functions in responses against both external and internal offenses. In T-cells, functions primarily as a coreceptor for MHC class I molecule:peptide complex. The antigens presented by class I peptides are derived from cytosolic proteins while class II derived from extracellular proteins. Interacts simultaneously with the T-cell receptor (TCR) and the MHC class I proteins presented by antigen presenting cells (APCs). In turn, recruits the Src kinase LCK to the vicinity of the TCR-CD3 complex. A palmitoylation site in the cytoplasmic tail of CD8B chain contributes to partitioning of CD8 into the plasma membrane lipid rafts where signaling proteins are enriched. Once LCK recruited, it initiates different intracellular signaling pathways by phosphorylating various substrates ultimately leading to lymphokine production, motility, adhesion and activation of cytotoxic T-lymphocytes (CTLs). Additionally, plays a critical role in thymic selection of CD8+ T-cells. In Saimiri sciureus (Common squirrel monkey), this protein is T-cell surface glycoprotein CD8 beta chain (CD8B).